The following is a 7524-amino-acid chain: Mucin-19 (7524 aa).

A signal peptide spans 1 to 20; that stretch reads MKLILLYLAVVLCFVGKGAA. The segment at 20-47 is disordered; that stretch reads ARSPTTTRTPTPSTSEKASHVPEATPTY. Low complexity predominate over residues 21-34; that stretch reads RSPTTTRTPTPSTS. The VWFD 1 domain occupies 55–225; it reads GEATMWGKDK…VCEDGVQYCD (171 aa). A disulfide bond links C79 and C224. Positions 298 to 353 constitute a TIL domain; it reads CPGKHIYKECGPSNPPTCSNVAPFQDSECVSGCTCPEGYLLDDIGEKGKCVLKEKC. VWFD domains lie at 392-568 and 851-1025; these read GICK…EGSP and STCH…QECS. 6 disulfide bridges follow: C394–C529, C434–C442, C853–C989, C875–C1024, C884–C986, and C900–C907. Low complexity predominate over residues 1244–1261; it reads AAATRASSSTSGSVETSV. Disordered stretches follow at residues 1244 to 7217 and 7249 to 7297; these read AAAT…SSLA and SVIK…CPDS. Polar residues predominate over residues 1262–1289; it reads PATTSTSKAQAHITTASSTETSALNSTA. 2 stretches are compositionally biased toward low complexity: residues 1320-7099 and 7112-7217; these read PAVS…AGSG and STSG…SSLA. A run of 36 repeats spans residues 1321–1483, 1484–1646, 1647–1809, 1810–1972, 1973–2135, 2136–2298, 2299–2461, 2462–2624, 2625–2787, 2788–2950, 2951–3113, 3114–3276, 3277–3439, 3440–3602, 3603–3765, 3766–3928, 3929–4091, 4092–4254, 4255–4417, 4418–4580, 4581–4743, 4744–4906, 4907–5069, 5070–5232, 5233–5395, 5396–5558, 5559–5721, 5722–5884, 5885–6047, 6048–6210, 6211–6373, 6374–6536, 6537–6699, 6700–6862, 6863–7025, and 7026–7188. Residues 1321-7188 are approximate repeats; that stretch reads AVSTTSAGST…AETAGSTTGP (5868 aa). Residues 7261–7291 show a composition bias toward polar residues; it reads AKSNETTGRTTSMPASTSVAPGVTTSPNISQ. VWFC domains lie at 7302–7368 and 7370–7432; these read PVCH…GHCE and RTCL…YKCK. Cystine bridges form between C7435–C7482, C7449–C7496, C7458–C7512, and C7462–C7514. The 85-residue stretch at 7435–7519 folds into the CTCK domain; the sequence is CRTTPVNVTV…TTCSCRDQCE (85 aa).

As to expression, specifically expressed in sublingual salivary glands. Expressed by mucous cells of the submandibular gland and submucosal gland of the trachea. Expression is altered in sld (sublingual gland differentiation arrest) mutants.

Its subcellular location is the secreted. May function in ocular mucus homeostasis. The polypeptide is Mucin-19 (Muc19) (Mus musculus (Mouse)).